Consider the following 234-residue polypeptide: Orotate phosphoribosyltransferase (234 aa).

K30 contacts 5-phospho-alpha-D-ribose 1-diphosphate. F38–F39 contacts orotate. 5-phospho-alpha-D-ribose 1-diphosphate contacts are provided by residues Y80–K81, R110, K111, K114, H116, and D136–A144. Orotate is bound by residues T140 and R168.

This sequence belongs to the purine/pyrimidine phosphoribosyltransferase family. PyrE subfamily. As to quaternary structure, homodimer.

It carries out the reaction orotidine 5'-phosphate + diphosphate = orotate + 5-phospho-alpha-D-ribose 1-diphosphate. Its pathway is pyrimidine metabolism; UMP biosynthesis via de novo pathway; UMP from orotate: step 1/2. In terms of biological role, catalyzes the transfer of a ribosyl phosphate group from 5-phosphoribose 1-diphosphate to orotate, leading to the formation of orotidine monophosphate (OMP). The polypeptide is Orotate phosphoribosyltransferase (URA5) (Metarhizium anisopliae (Entomophthora anisopliae)).